The primary structure comprises 83 residues: Keratin-associated protein 6-1 (83 aa).

The RPT 1-1 repeat unit spans residues 9 to 15 (YGGLGCG). The stretch at 19–25 (YGGLGCG) is one RPT 1-2 repeat. The stretch at 44–55 (GYGYGSRSLCGS) is one RPT 2-1 repeat. The stretch at 56–67 (GYGYGSRSLCGS) is one RPT 2-2 repeat.

This sequence belongs to the KRTAP type 6 family. In terms of assembly, interacts with wool keratins.

Its function is as follows. In the wool cortex, wool keratin intermediate filaments are embedded in an interfilamentous matrix, consisting of hair keratin-associated proteins (KRTAP), which are essential for the formation of a rigid and resistant wool shaft through their extensive disulfide bond cross-linking with abundant cysteine residues of wool keratins. The matrix proteins include the high-sulfur and high-glycine-tyrosine keratins. This is Keratin-associated protein 6-1 (KRTAP6-1) from Ovis aries (Sheep).